The following is a 405-amino-acid chain: Molybdopterin molybdenumtransferase 2 (405 aa).

Belongs to the MoeA family. The cofactor is Mg(2+).

The enzyme catalyses adenylyl-molybdopterin + molybdate = Mo-molybdopterin + AMP + H(+). Its pathway is cofactor biosynthesis; molybdopterin biosynthesis. In terms of biological role, catalyzes the insertion of molybdate into adenylated molybdopterin with the concomitant release of AMP. The chain is Molybdopterin molybdenumtransferase 2 (moaE2) from Mycobacterium tuberculosis (strain CDC 1551 / Oshkosh).